The following is a 294-amino-acid chain: Metallophosphoesterase MPPED2 (294 aa).

Aspartate 65, histidine 67, aspartate 86, asparagine 117, and histidine 213 together coordinate Mn(2+). Position 117 to 118 (asparagine 117 to histidine 118) interacts with GMP. Residues lysine 225–glutamate 226 and glycine 252–glutamate 255 contribute to the GMP site. Histidine 254 serves as a coordination point for Mn(2+).

This sequence belongs to the UPF0046 family. Homodimer. Requires Mn(2+) as cofactor. The cofactor is Co(2+).

Inhibited by nmolar levels of AMP and GMP. In terms of biological role, displays low metallophosphoesterase activity (in vitro). May play a role in the development of the nervous system. The polypeptide is Metallophosphoesterase MPPED2 (Mpped2) (Mus musculus (Mouse)).